Consider the following 60-residue polypeptide: Large ribosomal subunit protein uL30 (60 aa).

It belongs to the universal ribosomal protein uL30 family. As to quaternary structure, part of the 50S ribosomal subunit.

The polypeptide is Large ribosomal subunit protein uL30 (Bacillus mycoides (strain KBAB4) (Bacillus weihenstephanensis)).